We begin with the raw amino-acid sequence, 227 residues long: Uracil-DNA glycosylase (227 aa).

The active-site Proton acceptor is the D68.

Belongs to the uracil-DNA glycosylase (UDG) superfamily. UNG family.

The protein resides in the cytoplasm. It catalyses the reaction Hydrolyzes single-stranded DNA or mismatched double-stranded DNA and polynucleotides, releasing free uracil.. In terms of biological role, excises uracil residues from the DNA which can arise as a result of misincorporation of dUMP residues by DNA polymerase or due to deamination of cytosine. This chain is Uracil-DNA glycosylase, found in Mycobacterium sp. (strain JLS).